Here is a 247-residue protein sequence, read N- to C-terminus: MIDPIHQFHLNKIFTIGHIGNQEIAFTNSTAYMLLAVVLIAGMMLAAGRALVPGRFQSVVELSYEFVANTLRTSAGSHGMTFFPLVFSLFMFIFVSNIVGIIPYTFTVSSHIIVTFSLALLVFLTVIIYGFYKNGLKFFKLFVPSGIPAVILPLVVVIEIISFFSRPISHSVRLFANMLAGHVTLKVFASFVTMLGALGFVGKVGALLPLGLTVALTGLELMVAFLQAYVFTILTCIYLNDAIHPGH.

The next 6 membrane-spanning stretches (helical) occupy residues 32 to 52, 82 to 102, 112 to 132, 141 to 161, 181 to 201, and 206 to 226; these read YMLL…RALV, FFPL…VGII, IIVT…YGFY, LFVP…IEII, GHVT…LGFV, and ALLP…VAFL.

This sequence belongs to the ATPase A chain family. F-type ATPases have 2 components, CF(1) - the catalytic core - and CF(0) - the membrane proton channel. CF(1) has five subunits: alpha(3), beta(3), gamma(1), delta(1), epsilon(1). CF(0) has four main subunits: a, b, b' and c.

It localises to the cell inner membrane. Key component of the proton channel; it plays a direct role in the translocation of protons across the membrane. The sequence is that of ATP synthase subunit a 1 from Bradyrhizobium sp. (strain BTAi1 / ATCC BAA-1182).